A 433-amino-acid chain; its full sequence is UDP-N-acetylglucosamine 1-carboxyvinyltransferase 2 (433 aa).

A phosphoenolpyruvate-binding site is contributed by 23–24; sequence KN. A UDP-N-acetyl-alpha-D-glucosamine-binding site is contributed by Arg96. Catalysis depends on Cys120, which acts as the Proton donor. Cys120 is subject to 2-(S-cysteinyl)pyruvic acid O-phosphothioketal. UDP-N-acetyl-alpha-D-glucosamine contacts are provided by residues 125–129, Asp308, and Val330; that span reads RPIDL.

The protein belongs to the EPSP synthase family. MurA subfamily.

The protein localises to the cytoplasm. It carries out the reaction phosphoenolpyruvate + UDP-N-acetyl-alpha-D-glucosamine = UDP-N-acetyl-3-O-(1-carboxyvinyl)-alpha-D-glucosamine + phosphate. Its pathway is cell wall biogenesis; peptidoglycan biosynthesis. In terms of biological role, cell wall formation. Adds enolpyruvyl to UDP-N-acetylglucosamine. The chain is UDP-N-acetylglucosamine 1-carboxyvinyltransferase 2 from Enterococcus faecalis (strain ATCC 700802 / V583).